The sequence spans 128 residues: Adrenodoxin homolog (128 aa).

Residues 12 to 115 (EQIRIFFKTM…NAVFTVPRAT (104 aa)) form the 2Fe-2S ferredoxin-type domain. Residues cysteine 50, cysteine 56, cysteine 59, and cysteine 96 each contribute to the [2Fe-2S] cluster site.

Belongs to the adrenodoxin/putidaredoxin family. The cofactor is [2Fe-2S] cluster.

The protein localises to the mitosome. Its function is as follows. Ferredoxins are iron-sulfur proteins that transfer electrons in a wide variety of metabolic reactions. The polypeptide is Adrenodoxin homolog (Encephalitozoon cuniculi (strain GB-M1) (Microsporidian parasite)).